Here is a 481-residue protein sequence, read N- to C-terminus: Dual specificity protein kinase CLK4 (481 aa).

Disordered stretches follow at residues 1 to 47 (MRHS…KPHH) and 102 to 143 (SKSS…EDDE). Residues 8–19 (HCPDWDSRESWG) are compositionally biased toward basic and acidic residues. Basic residues-rich tracts occupy residues 106–119 (VRSRRSSPKRKRNR) and 126–136 (SHSKSHRRKRS). 2 positions are modified to phosphoserine: S136 and S138. The Protein kinase domain maps to 159–475 (YEIVDTLGEG…LDEALQHPFF (317 aa)). Residues 165–173 (LGEGAFGKV) and K189 contribute to the ATP site. The Proton acceptor role is filled by D286.

Belongs to the protein kinase superfamily. CMGC Ser/Thr protein kinase family. Lammer subfamily. As to quaternary structure, interacts with UBL5. Post-translationally, autophosphorylates on all three types of residues. As to expression, expressed in the hippocampus, the cerebellum and the olfactory bulb.

Its subcellular location is the nucleus. It catalyses the reaction L-seryl-[protein] + ATP = O-phospho-L-seryl-[protein] + ADP + H(+). It carries out the reaction L-threonyl-[protein] + ATP = O-phospho-L-threonyl-[protein] + ADP + H(+). The catalysed reaction is L-tyrosyl-[protein] + ATP = O-phospho-L-tyrosyl-[protein] + ADP + H(+). Its activity is regulated as follows. TG003 inhibits its kinase activity and affects the regulation of alternative splicing mediated by phosphorylation of SR proteins. Dual specificity kinase acting on both serine/threonine and tyrosine-containing substrates. Phosphorylates serine- and arginine-rich (SR) proteins of the spliceosomal complex and may be a constituent of a network of regulatory mechanisms that enable SR proteins to control RNA splicing. Phosphorylates SRSF1 and SRSF3. Required for the regulation of alternative splicing of MAPT/TAU. Regulates the alternative splicing of tissue factor (F3) pre-mRNA in endothelial cells. The sequence is that of Dual specificity protein kinase CLK4 (Clk4) from Mus musculus (Mouse).